The sequence spans 303 residues: ATP synthase gamma chain (303 aa).

It belongs to the ATPase gamma chain family. As to quaternary structure, F-type ATPases have 2 components, CF(1) - the catalytic core - and CF(0) - the membrane proton channel. CF(1) has five subunits: alpha(3), beta(3), gamma(1), delta(1), epsilon(1). CF(0) has three main subunits: a, b and c.

Its subcellular location is the cell inner membrane. In terms of biological role, produces ATP from ADP in the presence of a proton gradient across the membrane. The gamma chain is believed to be important in regulating ATPase activity and the flow of protons through the CF(0) complex. The chain is ATP synthase gamma chain from Bartonella quintana (strain Toulouse) (Rochalimaea quintana).